A 153-amino-acid chain; its full sequence is Large ribosomal subunit protein uL13 (153 aa).

The segment at 134 to 153 (EAQQPQALDVGSLNRKNVSA) is disordered.

Belongs to the universal ribosomal protein uL13 family. As to quaternary structure, part of the 50S ribosomal subunit.

In terms of biological role, this protein is one of the early assembly proteins of the 50S ribosomal subunit, although it is not seen to bind rRNA by itself. It is important during the early stages of 50S assembly. This Methylorubrum extorquens (strain CM4 / NCIMB 13688) (Methylobacterium extorquens) protein is Large ribosomal subunit protein uL13.